The following is a 630-amino-acid chain: PR domain zinc finger protein 5 (630 aa).

The SET domain occupies 8–124 (DRFSLKSSRV…TDTELLIGYL (117 aa)). Residues 167–190 (YACPQCESSFTSEDILAEHLQTLH) form a C2H2-type 1 zinc finger. Residues 199-221 (FKCKNCGKKFPVKQALQRHVLQC) form a C2H2-type 2; atypical zinc finger. A C2H2-type 3; atypical zinc finger spans residues 234–256 (FQCSVCNSSFSSASSFEQHQETC). C2H2-type zinc fingers lie at residues 262 to 287 (FVCK…ENVH), 295 to 317 (LICS…RKIH), 320 to 342 (FDCQ…MITH), 348 to 370 (YNCE…KVIH), 376 to 398 (YKCK…KKTH), 404 to 426 (FQCE…LLIH), 432 to 455 (FKCH…QVVH), 461 to 483 (YRCE…KKTH), 489 to 511 (KICP…IRSH), 517 to 539 (YQCP…IRTH), 545 to 567 (YKCS…KRTH), 573 to 595 (FQCD…KMTH), and 602 to 625 (AECQ…DNIH).

Belongs to the class V-like SAM-binding methyltransferase superfamily. Interacts with EHMT2/G9A, GFI1 and HDAC1. In terms of tissue distribution, widely expressed with highest levels in colon and ovary. Tends to be silenced in breast, colorectal, gastric and liver cancer tissues.

The protein resides in the nucleus. Functionally, sequence-specific DNA-binding transcription factor. Represses transcription at least in part by recruitment of the histone methyltransferase EHMT2/G9A and histone deacetylases such as HDAC1. Regulates hematopoiesis-associated protein-coding and microRNA (miRNA) genes. May regulate the expression of proteins involved in extracellular matrix development and maintenance, including fibrillar collagens, such as COL4A1 and COL11A1, connective tissue components, such as HAPLN1, and molecules regulating cell migration and adhesion, including EDIL3 and TGFB2. May cause G2/M arrest and apoptosis in cancer cells. The protein is PR domain zinc finger protein 5 (PRDM5) of Homo sapiens (Human).